The chain runs to 443 residues: GTPase Der (443 aa).

EngA-type G domains are found at residues 3–167 and 176–349; these read PVIA…PEEK and IKIA…QSIQ. Residues 9–16, 56–60, 119–122, 182–189, 229–233, and 294–297 contribute to the GTP site; these read GRPNVGKS, DTGGL, NKAD, DTAGI, and NKWD. Residues 350–434 form the KH-like domain; the sequence is QELTTGQLTR…PVHIKLKTDP (85 aa).

This sequence belongs to the TRAFAC class TrmE-Era-EngA-EngB-Septin-like GTPase superfamily. EngA (Der) GTPase family. In terms of assembly, associates with the 50S ribosomal subunit.

GTPase that plays an essential role in the late steps of ribosome biogenesis. The sequence is that of GTPase Der from Coxiella burnetii (strain CbuG_Q212) (Coxiella burnetii (strain Q212)).